We begin with the raw amino-acid sequence, 341 residues long: Glyceraldehyde-3-phosphate dehydrogenase, cytosolic (341 aa).

NAD(+) contacts are provided by residues 15 to 16 (RI), Asp-37, and Arg-84. D-glyceraldehyde 3-phosphate-binding positions include 155-157 (SCT), Thr-186, 215-216 (TG), and Arg-238. Cys-156 acts as the Nucleophile in catalysis. Asn-320 provides a ligand contact to NAD(+).

The protein belongs to the glyceraldehyde-3-phosphate dehydrogenase family. Homotetramer.

It localises to the cytoplasm. The enzyme catalyses D-glyceraldehyde 3-phosphate + phosphate + NAD(+) = (2R)-3-phospho-glyceroyl phosphate + NADH + H(+). The protein operates within carbohydrate degradation; glycolysis; pyruvate from D-glyceraldehyde 3-phosphate: step 1/5. Key enzyme in glycolysis that catalyzes the first step of the pathway by converting D-glyceraldehyde 3-phosphate (G3P) into 3-phospho-D-glyceroyl phosphate. Essential for the maintenance of cellular ATP levels and carbohydrate metabolism. This Magnolia liliiflora (Mulan magnolia) protein is Glyceraldehyde-3-phosphate dehydrogenase, cytosolic (GAPC).